Here is an 823-residue protein sequence, read N- to C-terminus: Protein Jade-3 (823 aa).

The tract at residues 1–32 (MKRHRPVSSSDSSDESPSTSFTSGSMYRIKSK) is disordered. Residues 8–25 (SSSDSSDESPSTSFTSGS) show a composition bias toward low complexity. 2 positions are modified to N6-acetyllysine: Lys-30 and Lys-32. Residue Ser-85 is modified to Phosphoserine. A PHD-type 1 zinc finger spans residues 200–250 (DVICDVCRSPDSEEGNDMVFCDKCNVCVHQACYGILKVPEGSWLCRSCVLG). The C2HC pre-PHD-type zinc-finger motif lies at 252–286 (YPQCVLCPKKGGALKTTKTGTKWAHVSCALWIPEV). The PHD-type 2 zinc finger occupies 310–366 (LVCNLCKLKTGACIQCSIKSCITAFHVTCAFEHGLEMKTILDEGDEVKFKSYCLKHS). 2 disordered regions span residues 372 to 395 (LGEA…KTSL) and 542 to 576 (KLKM…VHSI). Residues 561-575 (DQQPHSPDSSSSVHS) show a composition bias toward low complexity. Ser-566 carries the post-translational modification Phosphoserine. Lys-601 is subject to N6-acetyllysine. Ser-608 carries the phosphoserine modification. The interval 609–630 (LSHSRSEAKESSPAWRTPSSEC) is disordered. Residue Lys-638 is modified to N6-acetyllysine. Composition is skewed to polar residues over residues 650–664 (SSIG…SKFA) and 673–684 (WSGNVTQKDSSS). A disordered region spans residues 650-684 (SSIGNGKSQPNSKFAKSNGLEGSWSGNVTQKDSSS). Lys-735 bears the N6-acetyllysine mark. The disordered stretch occupies residues 758–823 (RAPYQENDGY…HPLSHSSMQR (66 aa)). Phosphoserine occurs at positions 774, 776, and 780. A compositionally biased stretch (basic and acidic residues) spans 781-809 (DGNKEKVRVRKDSSDRENPPHDSRRDCHG).

This sequence belongs to the JADE family. Component of the HBO1 complex composed at least of ING4 or ING5, KAT7/HBO1, MEAF6, and one of JADE1, JADE2 and JADE3. As to expression, ubiquitously expressed, with highest levels in placenta and uterus.

Its function is as follows. Scaffold subunit of some HBO1 complexes, which have a histone H4 acetyltransferase activity. This Homo sapiens (Human) protein is Protein Jade-3 (JADE3).